Reading from the N-terminus, the 232-residue chain is Orotidine 5'-phosphate decarboxylase (232 aa).

Substrate-binding positions include Asp16, Lys38, 65 to 74 (DLKLHDIGNT), Thr119, Arg180, Gln189, Gly209, and Arg210. Lys67 (proton donor) is an active-site residue.

The protein belongs to the OMP decarboxylase family. Type 1 subfamily. As to quaternary structure, homodimer.

The enzyme catalyses orotidine 5'-phosphate + H(+) = UMP + CO2. It participates in pyrimidine metabolism; UMP biosynthesis via de novo pathway; UMP from orotate: step 2/2. Catalyzes the decarboxylation of orotidine 5'-monophosphate (OMP) to uridine 5'-monophosphate (UMP). The sequence is that of Orotidine 5'-phosphate decarboxylase from Methylorubrum populi (strain ATCC BAA-705 / NCIMB 13946 / BJ001) (Methylobacterium populi).